The primary structure comprises 314 residues: MAAITEMATDSNDVINDGGTGDGIEKSTDSKPEIESDDLKPKSKPEYDQMKKLVAMFKKLNPEAKEFFPSYKRNTNQSDDFVIAIKPSGEDNKKVAINRRRRNNYNQGRRVRLPGRASKAQREDSIRRTVYVSDIDQSVTEEGLAGLFSSCGQVVDCRICGDPNSVLRFAFVEFSDDQGARSALSLGGTMIGYYPVRVLPSKTAILPVNPTFLPRSEDEREMCSRTIYCTNVDKNATEDDVNTFFQSACGEVTRLRLLGDQVHSTRIAFVEFAMAESAVAALNCSGIVLGSQPIRVSPSKTPVRSRITRSPSPN.

Residues 1 to 47 (MAAITEMATDSNDVINDGGTGDGIEKSTDSKPEIESDDLKPKSKPEY) are disordered. Residues 23–47 (GIEKSTDSKPEIESDDLKPKSKPEY) show a composition bias toward basic and acidic residues. The PAM2-like signature appears at 59 to 69 (KLNPEAKEFFP). The Bipartite nuclear localization signal motif lies at 99–112 (RRRRNNYNQGRRVR). RRM domains follow at residues 128–203 (RTVY…PSKT) and 225–301 (RTIY…PSKT).

Interacts with MPC. As to expression, expressed in cauline leaves, stems, rosette leaves, immature siliques and primary inflorescences but at a low level.

The protein resides in the nucleus. The protein is Polyadenylate-binding protein-interacting protein 8 (CID8) of Arabidopsis thaliana (Mouse-ear cress).